We begin with the raw amino-acid sequence, 264 residues long: Acyl-[acyl-carrier-protein]--UDP-N-acetylglucosamine O-acyltransferase (264 aa).

Belongs to the transferase hexapeptide repeat family. LpxA subfamily. As to quaternary structure, homotrimer.

It localises to the cytoplasm. It carries out the reaction a (3R)-hydroxyacyl-[ACP] + UDP-N-acetyl-alpha-D-glucosamine = a UDP-3-O-[(3R)-3-hydroxyacyl]-N-acetyl-alpha-D-glucosamine + holo-[ACP]. Its pathway is glycolipid biosynthesis; lipid IV(A) biosynthesis; lipid IV(A) from (3R)-3-hydroxytetradecanoyl-[acyl-carrier-protein] and UDP-N-acetyl-alpha-D-glucosamine: step 1/6. Involved in the biosynthesis of lipid A, a phosphorylated glycolipid that anchors the lipopolysaccharide to the outer membrane of the cell. The chain is Acyl-[acyl-carrier-protein]--UDP-N-acetylglucosamine O-acyltransferase from Rickettsia felis (strain ATCC VR-1525 / URRWXCal2) (Rickettsia azadi).